We begin with the raw amino-acid sequence, 189 residues long: MKKIVLYGGQFNPIHTAHMIVASEVFHELQPDEFYFLPSFMSPLKKHHDFIDVQHRLTMIQMIIDELGFGDICDDEIKRGGQSYTYDTIKAFKEQHKDSELYFVIGTDQYNQLEKWYQIEYLKEMVTFVVVNRDKNSQNVENAMIAIQIPRVDISSTMIRQRVSEGKSIQVLVPKSVENYIKGEGLYEH.

It belongs to the NadD family.

It carries out the reaction nicotinate beta-D-ribonucleotide + ATP + H(+) = deamido-NAD(+) + diphosphate. The protein operates within cofactor biosynthesis; NAD(+) biosynthesis; deamido-NAD(+) from nicotinate D-ribonucleotide: step 1/1. Functionally, catalyzes the reversible adenylation of nicotinate mononucleotide (NaMN) to nicotinic acid adenine dinucleotide (NaAD). This is Probable nicotinate-nucleotide adenylyltransferase from Staphylococcus aureus (strain USA300 / TCH1516).